The chain runs to 307 residues: MEKYDLITILGPTASGKTPLAAALAYKLDTEIISGDSRQVYRRMDLGTGKDLEDYVVNGQQIPYHLIDIVDPGYKYNVFEFQRDFLNAYDQVRWKDKLPILCGGTGMYLESVLKGYRLLPVPENPKLRDSLADKSLAELTRLLSTYRKLHNSTDVDTVKRAIRAIEIEEYYKHQSAEYREFPQIHSLIIGVDIARELRREKISHRLKQRLDEGMVNEVKALLDSGISSEDLIYYGLEYKYLTLYVLGKLSFNEMFHQLEIAIHQFAKRQMTWFRGMERRGFTIHWLDACLPMEDKVEKIINLLHTKN.

Residue 11–18 (GPTASGKT) coordinates ATP. 13–18 (TASGKT) provides a ligand contact to substrate. The segment at 36 to 39 (DSRQ) is interaction with substrate tRNA.

This sequence belongs to the IPP transferase family. In terms of assembly, monomer. Requires Mg(2+) as cofactor.

It carries out the reaction adenosine(37) in tRNA + dimethylallyl diphosphate = N(6)-dimethylallyladenosine(37) in tRNA + diphosphate. In terms of biological role, catalyzes the transfer of a dimethylallyl group onto the adenine at position 37 in tRNAs that read codons beginning with uridine, leading to the formation of N6-(dimethylallyl)adenosine (i(6)A). This chain is tRNA dimethylallyltransferase 2, found in Phocaeicola vulgatus (strain ATCC 8482 / DSM 1447 / JCM 5826 / CCUG 4940 / NBRC 14291 / NCTC 11154) (Bacteroides vulgatus).